Consider the following 194-residue polypeptide: Imidazoleglycerol-phosphate dehydratase (194 aa).

Belongs to the imidazoleglycerol-phosphate dehydratase family.

The protein resides in the cytoplasm. The enzyme catalyses D-erythro-1-(imidazol-4-yl)glycerol 3-phosphate = 3-(imidazol-4-yl)-2-oxopropyl phosphate + H2O. It participates in amino-acid biosynthesis; L-histidine biosynthesis; L-histidine from 5-phospho-alpha-D-ribose 1-diphosphate: step 6/9. The chain is Imidazoleglycerol-phosphate dehydratase from Methanothermobacter thermautotrophicus (strain ATCC 29096 / DSM 1053 / JCM 10044 / NBRC 100330 / Delta H) (Methanobacterium thermoautotrophicum).